The primary structure comprises 108 residues: Large ribosomal subunit protein uL24 (108 aa).

It belongs to the universal ribosomal protein uL24 family. In terms of assembly, part of the 50S ribosomal subunit.

In terms of biological role, one of two assembly initiator proteins, it binds directly to the 5'-end of the 23S rRNA, where it nucleates assembly of the 50S subunit. Its function is as follows. One of the proteins that surrounds the polypeptide exit tunnel on the outside of the subunit. In Mycoplasma capricolum subsp. capricolum (strain California kid / ATCC 27343 / NCTC 10154), this protein is Large ribosomal subunit protein uL24.